Consider the following 299-residue polypeptide: MTLNSDADPDDPEPAAPARDLSKPASKPARSTRKSSSAKSAQGAEGEPRKTPGRRAPRTPASDYRIAEQPAFVLHSYPYRETSLIIDVLSRDHGRLALVAKGAKRPHSALRGVLQTFQPLALSWSGKSEVRTLTGAEWVGGMLPLTGGALLCGFYVNELLVKFCAREDPHPQLFHHYVVTMTRLAHDEPPVQVLRSFERVLLRETGYAMALDRTVARKAVLAEGRYVFDPERGVREAADDLPAQWPVIAGQTLLDMEQDDYHRAQTVAQSKTLMRFLLNTYLGGTPLATRQILIDLQNL.

The disordered stretch occupies residues 1 to 62 (MTLNSDADPD…GRRAPRTPAS (62 aa)). Over residues 25-41 (ASKPARSTRKSSSAKSA) the composition is skewed to low complexity.

Belongs to the RecO family.

In terms of biological role, involved in DNA repair and RecF pathway recombination. The chain is DNA repair protein RecO from Paraburkholderia xenovorans (strain LB400).